The chain runs to 173 residues: Translationally-controlled tumor protein homolog (173 aa).

The TCTP domain occupies 1–173 (MIIYKDILTG…WKHGLEEYKV (173 aa)).

The protein belongs to the TCTP family.

The protein resides in the cytoplasm. The protein localises to the cytoskeleton. Functionally, involved in protein synthesis. Involved in microtubule stabilization. The protein is Translationally-controlled tumor protein homolog of Aspergillus oryzae (strain ATCC 42149 / RIB 40) (Yellow koji mold).